The following is a 370-amino-acid chain: tRNA 2-selenouridine synthase (370 aa).

The 125-residue stretch at 12–136 (FLDDVPMMDM…MRTFLLETTQ (125 aa)) folds into the Rhodanese domain. Catalysis depends on Cys95, which acts as the S-selanylcysteine intermediate.

The protein belongs to the SelU family. As to quaternary structure, monomer.

It carries out the reaction 5-methylaminomethyl-2-thiouridine(34) in tRNA + selenophosphate + (2E)-geranyl diphosphate + H2O + H(+) = 5-methylaminomethyl-2-selenouridine(34) in tRNA + (2E)-thiogeraniol + phosphate + diphosphate. It catalyses the reaction 5-methylaminomethyl-2-thiouridine(34) in tRNA + (2E)-geranyl diphosphate = 5-methylaminomethyl-S-(2E)-geranyl-thiouridine(34) in tRNA + diphosphate. The catalysed reaction is 5-methylaminomethyl-S-(2E)-geranyl-thiouridine(34) in tRNA + selenophosphate + H(+) = 5-methylaminomethyl-2-(Se-phospho)selenouridine(34) in tRNA + (2E)-thiogeraniol. The enzyme catalyses 5-methylaminomethyl-2-(Se-phospho)selenouridine(34) in tRNA + H2O = 5-methylaminomethyl-2-selenouridine(34) in tRNA + phosphate. Functionally, involved in the post-transcriptional modification of the uridine at the wobble position (U34) of tRNA(Lys), tRNA(Glu) and tRNA(Gln). Catalyzes the conversion of 2-thiouridine (S2U-RNA) to 2-selenouridine (Se2U-RNA). Acts in a two-step process involving geranylation of 2-thiouridine (S2U) to S-geranyl-2-thiouridine (geS2U) and subsequent selenation of the latter derivative to 2-selenouridine (Se2U) in the tRNA chain. In Pseudomonas putida (strain ATCC 700007 / DSM 6899 / JCM 31910 / BCRC 17059 / LMG 24140 / F1), this protein is tRNA 2-selenouridine synthase.